The following is a 233-amino-acid chain: Purine nucleoside phosphorylase DeoD-type (233 aa).

Position 4 (H4) interacts with a purine D-ribonucleoside. Phosphate-binding positions include G20, R24, R43, and 87 to 90; that span reads RIGT. Residues 179 to 181 and 203 to 204 contribute to the a purine D-ribonucleoside site; these read EME and SD. The active-site Proton donor is the D204.

It belongs to the PNP/UDP phosphorylase family. As to quaternary structure, homohexamer; trimer of homodimers.

It catalyses the reaction a purine D-ribonucleoside + phosphate = a purine nucleobase + alpha-D-ribose 1-phosphate. It carries out the reaction a purine 2'-deoxy-D-ribonucleoside + phosphate = a purine nucleobase + 2-deoxy-alpha-D-ribose 1-phosphate. Its function is as follows. Catalyzes the reversible phosphorolytic breakdown of the N-glycosidic bond in the beta-(deoxy)ribonucleoside molecules, with the formation of the corresponding free purine bases and pentose-1-phosphate. This chain is Purine nucleoside phosphorylase DeoD-type, found in Helicobacter pylori (strain G27).